Here is a 154-residue protein sequence, read N- to C-terminus: Endoribonuclease YbeY (154 aa).

Zn(2+)-binding residues include H120, H124, and H130.

This sequence belongs to the endoribonuclease YbeY family. Requires Zn(2+) as cofactor.

Its subcellular location is the cytoplasm. In terms of biological role, single strand-specific metallo-endoribonuclease involved in late-stage 70S ribosome quality control and in maturation of the 3' terminus of the 16S rRNA. The chain is Endoribonuclease YbeY from Leptospira biflexa serovar Patoc (strain Patoc 1 / Ames).